The sequence spans 163 residues: Bacterial ISG15-like ubiquitin-like protein BilA (163 aa).

Ubiquitin-like BIL-type domains are found at residues 4–80 (LVVF…RCKR) and 81–163 (IRAT…RIEG). Gly-163 participates in a covalent cross-link: Glycyl lysine isopeptide (Gly-Lys) (interchain with K-? in central tail fiber acceptor protein).

Its function is as follows. Component of the Bil (bacterial ISG15-like) antiviral defense system, composed of BilA, BilB, BilC and BilD. The Bil system specifically conjugates a ubiquitin-like moiety (bilA) to the bacteriophage central tail fiber (CTF, or tip attachment protein J) via reactions involving E1 (bilD) and E2 (bilB). Modifies CTF of phage SECphi27 and SECphi4, which probably interferes with assembly of the phage tail. Also modifies T5 baseplate hub protein pb3 (gene D16), but not gp27 of phage T6 (Bil defends against T6). Bil-encoding bacteria produce mostly defective phage SECphi27, many of which have phage assembly defects, including no tails. SECphi27 phage progeny produced in E.coli with the Bil system inject less DNA into naive host cells, maybe because the phage are less able to adsorb and inject their DNA into host cells. Functionally, expression of the Bil system in E.coli (strain MG1655) confers about 100-fold resistance to phage SECphi27, SECphi18, SECphi6, SECphi4 and T5, but not to SECphi17. When cells expressing the Bil system are infected by phage SECphi27 at low multiplicity of infection (0.03 MOI) the culture survives, at 3.0 MOI the culture collapses at the same time as cells without the Bil system. In Collimonas sp. (strain OK412), this protein is Bacterial ISG15-like ubiquitin-like protein BilA.